The chain runs to 30 residues: Trypsin inhibitor 7 (30 aa).

3 disulfides stabilise this stretch: Cys-4-Cys-21, Cys-11-Cys-23, and Cys-17-Cys-29.

This sequence belongs to the protease inhibitor I7 (squash-type serine protease inhibitor) family.

The protein resides in the secreted. In terms of biological role, strongly inhibits trypsin, weakly inhibits chymotrypsin. This chain is Trypsin inhibitor 7, found in Cyclanthera pedata (Achocha).